The following is a 717-amino-acid chain: MAAAALLAAVDRNQLRRVPILLLQPREWAWKLRTMKYGTTPGGSITKVLIANRGEIACRVIRTAKKMGVQSVAVYSEADRNSMHVDMADEAYSIGPAPSQQSYLAMEKIIQVAKSSAAQAIHPGYGFLSENMEFAELCKQEGIIFIGPPSSAIRDMGIKSTSKSIMAAAGVPVVEGYHGKDQSDQCLREHAGKIGYPVMIKAVRGGGGKGMRIVRSEREFQEQLESARREAKKSFNDDAMLIEKFVDTPRHVEVQVFGDHHGNAVYLFERDCSVQRRHQKIIEEAPAPGINPEVRRKLGEAAVRAAKAVKYVGAGTVEFIMDSRHNFYFMEMNTRLQVEHPVTEMITGTDLVEWQLRIAAGEKIPLSQEEIPLQGHAFEARIYAEDPDNNFMPGAGPLVHLSTPSADMSTRIETGVRQGDEVSVHYDPMIAKLVVWASDRQSALSKLRYCLHQYNIVGLRSNVDFLLRLSGHPEFEAGNVHTDFIPQHHKDLLPSHSTIAKESVCQAALGLILKEKEMTSAFKLHTQDQFSPFSFSSGRRLNISYTRNMTLRSGKSDIVIAVTYNRDGSYDMQIDNKSFRVLGDLSSEDGCTYLKSSINGVARKSKFILLDNTVHLFSMEGSIEVGIPVPKYLSPVSAEGAQGGTIAPMTGTIEKVFVKAGDRVKAGDSLMVMIAMKMEHTIKAPKDGRIKKVFFSEGAQANRHAPLVEFEEEESDK.

Residues 1–38 (MAAAALLAAVDRNQLRRVPILLLQPREWAWKLRTMKYG) constitute a mitochondrion transit peptide. Residues 45-490 (ITKVLIANRG…HTDFIPQHHK (446 aa)) enclose the Biotin carboxylation domain. K159 provides a ligand contact to ATP. Residues 163–360 (KSIMAAAGVP…LVEWQLRIAA (198 aa)) enclose the ATP-grasp domain. 2 positions are modified to N6-acetyllysine: K180 and K193. ATP is bound by residues K201 and 207-208 (GG). K233 bears the N6-acetyllysine mark. The ATP site is built by H251, H278, and E318. Residue R335 is part of the active site. K490 is modified (N6-acetyllysine). K577 is subject to N6-acetyllysine; alternate. K577 is modified (N6-succinyllysine; alternate). A Biotinyl-binding domain is found at 622–711 (SIEVGIPVPK…NRHAPLVEFE (90 aa)). K677 is subject to N6-biotinyllysine.

In terms of assembly, probably a dodecamer composed of six biotin-containing alpha subunits (MCCC1) and six beta (MCCC2) subunits. Interacts (via the biotin carboxylation domain) with SIRT4. Requires biotin as cofactor. Post-translationally, acetylated.

The protein resides in the mitochondrion matrix. The catalysed reaction is 3-methylbut-2-enoyl-CoA + hydrogencarbonate + ATP = 3-methyl-(2E)-glutaconyl-CoA + ADP + phosphate + H(+). It participates in amino-acid degradation; L-leucine degradation; (S)-3-hydroxy-3-methylglutaryl-CoA from 3-isovaleryl-CoA: step 2/3. Its function is as follows. Biotin-attachment subunit of the 3-methylcrotonyl-CoA carboxylase, an enzyme that catalyzes the conversion of 3-methylcrotonyl-CoA to 3-methylglutaconyl-CoA, a critical step for leucine and isovaleric acid catabolism. This chain is Methylcrotonoyl-CoA carboxylase subunit alpha, mitochondrial (Mccc1), found in Mus musculus (Mouse).